A 600-amino-acid chain; its full sequence is Aspartate--tRNA(Asp/Asn) ligase (600 aa).

Residue E174 coordinates L-aspartate. The interval 198–201 (QLFK) is aspartate. R220 serves as a coordination point for L-aspartate. Residues 220–222 (RDE) and Q229 contribute to the ATP site. Residue H457 coordinates L-aspartate. E491 contacts ATP. R498 lines the L-aspartate pocket. Residue 543–546 (GLDR) participates in ATP binding.

It belongs to the class-II aminoacyl-tRNA synthetase family. Type 1 subfamily. Homodimer.

It is found in the cytoplasm. The enzyme catalyses tRNA(Asx) + L-aspartate + ATP = L-aspartyl-tRNA(Asx) + AMP + diphosphate. Its function is as follows. Aspartyl-tRNA synthetase with relaxed tRNA specificity since it is able to aspartylate not only its cognate tRNA(Asp) but also tRNA(Asn). Reaction proceeds in two steps: L-aspartate is first activated by ATP to form Asp-AMP and then transferred to the acceptor end of tRNA(Asp/Asn). This Burkholderia orbicola (strain MC0-3) protein is Aspartate--tRNA(Asp/Asn) ligase.